The following is a 28-amino-acid chain: Conotoxin Cl5.3 (28 aa).

This sequence belongs to the conotoxin T superfamily. Post-translationally, contains 2 disulfide bonds that can be either 'C1-C3, C2-C4' or 'C1-C4, C2-C3', since these disulfide connectivities have been observed for conotoxins with cysteine framework V (for examples, see AC P0DQQ7 and AC P81755). In terms of tissue distribution, expressed by the venom duct.

It localises to the secreted. The polypeptide is Conotoxin Cl5.3 (Californiconus californicus (California cone)).